The following is a 76-amino-acid chain: MARFFRRRKFCRFTAEGVKEIDFKDLNTLKAYISETGKIVPSRITGTKARYQRQLATAIKRARYLALLPYTDSHGR.

Belongs to the bacterial ribosomal protein bS18 family. As to quaternary structure, part of the 30S ribosomal subunit. Forms a tight heterodimer with protein bS6.

In terms of biological role, binds as a heterodimer with protein bS6 to the central domain of the 16S rRNA, where it helps stabilize the platform of the 30S subunit. The chain is Small ribosomal subunit protein bS18 from Azotobacter vinelandii (strain DJ / ATCC BAA-1303).